We begin with the raw amino-acid sequence, 233 residues long: MTIGIIGAMEEEVELLKNTMPSIEEVIIGGAKFYIGEIAGKEVVLLESGIGKVNAALGTTLLADRFKPEIIINTGSAGGIGEGLAIGDVIISDRLAYGDVDVTEFGYTYGQVPRMPAFYQGDAVLLKKAETIYRDYFADSENKAVYGLVITNDSFIMRPDQHEIIRTFFPDVKAVEMEAAAIAQVAYQFDIPFLIIRAISDLANQEATMSFDEFIHLAAKQSAICIIELLKTI.

Catalysis depends on E12, which acts as the Proton acceptor. Residues G78, I156, and 177 to 178 (ME) each bind substrate. The Proton donor role is filled by D201.

Belongs to the PNP/UDP phosphorylase family. MtnN subfamily.

The enzyme catalyses S-adenosyl-L-homocysteine + H2O = S-(5-deoxy-D-ribos-5-yl)-L-homocysteine + adenine. The catalysed reaction is S-methyl-5'-thioadenosine + H2O = 5-(methylsulfanyl)-D-ribose + adenine. It catalyses the reaction 5'-deoxyadenosine + H2O = 5-deoxy-D-ribose + adenine. It participates in amino-acid biosynthesis; L-methionine biosynthesis via salvage pathway; S-methyl-5-thio-alpha-D-ribose 1-phosphate from S-methyl-5'-thioadenosine (hydrolase route): step 1/2. Catalyzes the irreversible cleavage of the glycosidic bond in both 5'-methylthioadenosine (MTA) and S-adenosylhomocysteine (SAH/AdoHcy) to adenine and the corresponding thioribose, 5'-methylthioribose and S-ribosylhomocysteine, respectively. Also cleaves 5'-deoxyadenosine, a toxic by-product of radical S-adenosylmethionine (SAM) enzymes, into 5-deoxyribose and adenine. The sequence is that of 5'-methylthioadenosine/S-adenosylhomocysteine nucleosidase from Listeria innocua serovar 6a (strain ATCC BAA-680 / CLIP 11262).